A 38-amino-acid polypeptide reads, in one-letter code: Alpha-amylase (38 aa).

The protein belongs to the glycosyl hydrolase 13 family. In terms of assembly, monomer. Ca(2+) is required as a cofactor. It depends on chloride as a cofactor. As to expression, expressed by the venom gland.

Its subcellular location is the secreted. It carries out the reaction Endohydrolysis of (1-&gt;4)-alpha-D-glucosidic linkages in polysaccharides containing three or more (1-&gt;4)-alpha-linked D-glucose units.. In Tityus serrulatus (Brazilian scorpion), this protein is Alpha-amylase.